The primary structure comprises 182 residues: A-type ATP synthase subunit E (182 aa).

The protein belongs to the V-ATPase E subunit family. As to quaternary structure, has multiple subunits with at least A(3), B(3), C, D, E, F, H, I and proteolipid K(x).

The protein localises to the cell membrane. Its function is as follows. Component of the A-type ATP synthase that produces ATP from ADP in the presence of a proton gradient across the membrane. The sequence is that of A-type ATP synthase subunit E from Picrophilus torridus (strain ATCC 700027 / DSM 9790 / JCM 10055 / NBRC 100828 / KAW 2/3).